We begin with the raw amino-acid sequence, 213 residues long: Redox-sensing transcriptional repressor Rex (213 aa).

Positions 17-56 form a DNA-binding region, H-T-H motif; the sequence is LYYRIFKRFHSENIEKASSKQIAEAIGIDSATVRRDFSYF. Residue 91-96 coordinates NAD(+); that stretch reads GVGNIG.

It belongs to the transcriptional regulatory Rex family. In terms of assembly, homodimer.

The protein resides in the cytoplasm. Modulates transcription in response to changes in cellular NADH/NAD(+) redox state. This Streptococcus mutans serotype c (strain ATCC 700610 / UA159) protein is Redox-sensing transcriptional repressor Rex.